A 1828-amino-acid chain; its full sequence is Protein TIC 214 (1828 aa).

A run of 6 helical transmembrane segments spans residues 18–38 (IINS…FSIG), 64–84 (FITG…HLAM), 87–107 (PYTI…WKNH), 124–144 (FSIQ…HFVL), 172–192 (VGWL…LFWI), and 222–242 (VNIF…SPIL). Residues 270–279 (SEAKETKQEQ) are compositionally biased toward basic and acidic residues. 4 disordered regions span residues 270 to 301 (SEAK…PNKL), 618 to 637 (DLQQ…HAIR), 741 to 763 (EFKT…EDKK), and 1533 to 1571 (KEEF…RQSK). Over residues 1550–1562 (KDVEKDYAKSDIK) the composition is skewed to basic and acidic residues.

It belongs to the TIC214 family. Part of the Tic complex.

Its subcellular location is the plastid. It localises to the chloroplast inner membrane. Functionally, involved in protein precursor import into chloroplasts. May be part of an intermediate translocation complex acting as a protein-conducting channel at the inner envelope. In Calycanthus floridus var. glaucus (Eastern sweetshrub), this protein is Protein TIC 214.